Reading from the N-terminus, the 208-residue chain is Probable acyl-homoserine-lactone synthase (208 aa).

The protein belongs to the autoinducer synthase family.

It carries out the reaction a fatty acyl-[ACP] + S-adenosyl-L-methionine = an N-acyl-L-homoserine lactone + S-methyl-5'-thioadenosine + holo-[ACP] + H(+). In terms of biological role, required for the synthesis of OHHL (N-(3-oxooctanoyl)-L-homoserine lactone), an autoinducer molecule which binds to TraR and thus acts in the control of conjugal transfer. This Sinorhizobium fredii (strain NBRC 101917 / NGR234) protein is Probable acyl-homoserine-lactone synthase (traI).